The primary structure comprises 556 residues: Calcium-dependent protein kinase 5 (556 aa).

Residues 1 to 40 (MGNSCRGSFKDKLDEGDNNKPEDYSKTSTTNLSSNSDHSP) are disordered. Residue glycine 2 is the site of N-myristoyl glycine attachment. The span at 8–25 (SFKDKLDEGDNNKPEDYS) shows a compositional bias: basic and acidic residues. Residues 26–39 (KTSTTNLSSNSDHS) are compositionally biased toward low complexity. The Protein kinase domain maps to 97 to 355 (YTLSRKLGQG…AHEVLRHPWI (259 aa)). Residues 103-111 (LGQGQFGTT) and lysine 126 contribute to the ATP site. Catalysis depends on aspartate 221, which acts as the Proton acceptor. Residue serine 261 is modified to Phosphoserine. The segment at 361 to 391 (APDRALDPAVLSRLKQFSAMNKLKKMALKVI) is autoinhibitory domain. EF-hand domains follow at residues 398-433 (EEIAGLREMFQAMDTDNSGAITFDELKAGLRKYGST), 434-469 (LKDTEIHDLMDAADVDNSGTIDYSEFIAATIHLNKL), 470-505 (EREEHLVAAFQYFDKDGSGFITIDELQQACVEHGMA), and 509-539 (LEDIIKEVDQNNDGKIDYGEFVEMMQKGNAG). 18 residues coordinate Ca(2+): aspartate 411, aspartate 413, serine 415, glutamate 422, aspartate 447, aspartate 449, serine 451, threonine 453, glutamate 458, aspartate 483, aspartate 485, serine 487, glutamate 494, aspartate 517, asparagine 519, aspartate 521, lysine 523, and glutamate 528.

It belongs to the protein kinase superfamily. Ser/Thr protein kinase family. CDPK subfamily.

It is found in the membrane. The enzyme catalyses L-seryl-[protein] + ATP = O-phospho-L-seryl-[protein] + ADP + H(+). It catalyses the reaction L-threonyl-[protein] + ATP = O-phospho-L-threonyl-[protein] + ADP + H(+). With respect to regulation, activated by calcium. Autophosphorylation may play an important role in the regulation of the kinase activity. May play a role in signal transduction pathways that involve calcium as a second messenger. In Arabidopsis thaliana (Mouse-ear cress), this protein is Calcium-dependent protein kinase 5 (CPK5).